Reading from the N-terminus, the 192-residue chain is Transcriptional activator GvpE (192 aa).

A DNA-binding site is contributed by 140–145; that stretch reads KRKVYR. The segment at 150-181 is leucine-zipper; sequence EATFDTVEPAVNRLVTFSLVLKALMIDCNARY.

As to quaternary structure, interacts with GvpD, also with c-GvpD from H.salinarum.

It localises to the cytoplasm. Its activity is regulated as follows. The amount of protein that accumulates is controlled by GvpD; GvpD causes a reduction in the amount of GvpE, preventing accumulation of excessive amounts of gas vesicles. Its function is as follows. Plays a regulatory role in gas vesicle synthesis, activates transcription of the gvpA operon, and probably of the gvpD operon. Gas vesicles are hollow, gas filled proteinaceous nanostructures found in some microorganisms. They allow positioning of halobacteria at the optimal depth for growth in the poorly aerated, shallow brine pools of their habitat. Functionally, expression of a 9.5 kb mc-vac DNA fragment containing 2 divergently transcribed regions (gvpD-gvpE-gvpF-gvpG-gvpH-gvpI-gvpJ-gvpK-gvpL-gvpM and gvpA-gvpC-gvpN-gvpO) allows H.volcanii to produce gas vesicles. The chain is Transcriptional activator GvpE from Haloferax mediterranei (strain ATCC 33500 / DSM 1411 / JCM 8866 / NBRC 14739 / NCIMB 2177 / R-4) (Halobacterium mediterranei).